We begin with the raw amino-acid sequence, 169 residues long: S-ribosylhomocysteine lyase (169 aa).

The Fe cation site is built by His54, His58, and Cys128.

It belongs to the LuxS family. As to quaternary structure, homodimer. The cofactor is Fe cation.

It catalyses the reaction S-(5-deoxy-D-ribos-5-yl)-L-homocysteine = (S)-4,5-dihydroxypentane-2,3-dione + L-homocysteine. Involved in the synthesis of autoinducer 2 (AI-2) which is secreted by bacteria and is used to communicate both the cell density and the metabolic potential of the environment. The regulation of gene expression in response to changes in cell density is called quorum sensing. Catalyzes the transformation of S-ribosylhomocysteine (RHC) to homocysteine (HC) and 4,5-dihydroxy-2,3-pentadione (DPD). The protein is S-ribosylhomocysteine lyase of Shewanella sediminis (strain HAW-EB3).